A 51-amino-acid chain; its full sequence is Sperm protamine P1 (51 aa).

Disulfide bonds link C7/C15 and C38/C48.

Belongs to the protamine P1 family. As to quaternary structure, cross-linked by interchain disulfide bonds around the DNA-helix. In terms of processing, phosphorylated by SRPK1. As to expression, testis.

The protein localises to the nucleus. The protein resides in the chromosome. Its function is as follows. Protamines substitute for histones in the chromatin of sperm during the haploid phase of spermatogenesis. They compact sperm DNA into a highly condensed, stable and inactive complex. This is Sperm protamine P1 (Prm1) from Rattus norvegicus (Rat).